We begin with the raw amino-acid sequence, 201 residues long: Peptide deformylase (201 aa).

The tract at residues 1–34 is disordered; the sequence is MSLNFAAMARQSERQASTVMVPKGEEQPESPKIH. Residues 23 to 32 are compositionally biased toward basic and acidic residues; sequence KGEEQPESPK. 2 residues coordinate Fe cation: cysteine 121 and histidine 163. The active site involves glutamate 164. Residue histidine 167 participates in Fe cation binding.

Belongs to the polypeptide deformylase family. Requires Fe(2+) as cofactor.

It catalyses the reaction N-terminal N-formyl-L-methionyl-[peptide] + H2O = N-terminal L-methionyl-[peptide] + formate. Removes the formyl group from the N-terminal Met of newly synthesized proteins. Requires at least a dipeptide for an efficient rate of reaction. N-terminal L-methionine is a prerequisite for activity but the enzyme has broad specificity at other positions. The protein is Peptide deformylase of Synechococcus sp. (strain RCC307).